Here is a 208-residue protein sequence, read N- to C-terminus: Small ribosomal subunit protein eS8 (208 aa).

The disordered stretch occupies residues 1–23 (MGISRDSAHKRRATGGKRKSLRK). The span at 8–23 (AHKRRATGGKRKSLRK) shows a compositional bias: basic residues.

This sequence belongs to the eukaryotic ribosomal protein eS8 family. Component of the small ribosomal subunit. Identified in a IGF2BP1-dependent mRNP granule complex containing untranslated mRNAs. Part of the small subunit (SSU) processome, composed of more than 70 proteins and the RNA chaperone small nucleolar RNA (snoRNA) U3.

It localises to the cytoplasm. Its subcellular location is the membrane. The protein resides in the nucleus. It is found in the nucleolus. In terms of biological role, component of the small ribosomal subunit. The ribosome is a large ribonucleoprotein complex responsible for the synthesis of proteins in the cell. Part of the small subunit (SSU) processome, first precursor of the small eukaryotic ribosomal subunit. During the assembly of the SSU processome in the nucleolus, many ribosome biogenesis factors, an RNA chaperone and ribosomal proteins associate with the nascent pre-rRNA and work in concert to generate RNA folding, modifications, rearrangements and cleavage as well as targeted degradation of pre-ribosomal RNA by the RNA exosome. This Drosophila melanogaster (Fruit fly) protein is Small ribosomal subunit protein eS8 (RpS8).